The following is a 205-amino-acid chain: Ras-related protein Rab-1A (205 aa).

N-acetylserine is present on Ser-2. Residues Ser-20, Gly-21, Gly-23, Lys-24, Ser-25, Cys-26, Glu-38, and Thr-43 each contribute to the GTP site. Ser-25 lines the Mg(2+) pocket. A Switch 1 motif is present at residues Asp-34 to Phe-48. Thr-43 lines the Mg(2+) pocket. Glycyl lysine isopeptide (Lys-Gly) (interchain with G-Cter in ubiquitin) cross-links involve residues Lys-49 and Lys-61. Asp-66 serves as a coordination point for Mg(2+). Positions Asp-66 to Gly-83 match the Switch 2 motif. Gly-69, Asn-124, Lys-125, Asp-127, Ala-155, and Lys-156 together coordinate GTP. Residues Pro-178–Cys-205 are disordered. The residue at position 194 (Ser-194) is a Phosphoserine; by CDK1. 2 S-geranylgeranyl cysteine lipidation sites follow: Cys-204 and Cys-205.

This sequence belongs to the small GTPase superfamily. Rab family. As to quaternary structure, may interact with YIPF5. Interacts with C9orf72; the interaction mediates recruitment of RAB1A to the ATG1/ULK1 kinase complex. Interacts with GDI1; this promotes dissociation from membranes. Requires Mg(2+) as cofactor. Phosphorylated by CDK1 kinase during mitosis. In terms of processing, ubiquitinated via 'Lys-11'-linked ubiquitination on Lys-49 and Lys-61; impairing the recruitment of guanosine diphosphate (GDP) dissociation inhibitor 1/GDI1.

It is found in the golgi apparatus. It localises to the endoplasmic reticulum. The protein localises to the early endosome. The protein resides in the cytoplasm. Its subcellular location is the cytosol. It is found in the membrane. It localises to the melanosome. The catalysed reaction is GTP + H2O = GDP + phosphate + H(+). Regulated by guanine nucleotide exchange factors (GEFs) which promote the exchange of bound GDP for free GTP. Regulated by GTPase activating proteins (GAPs) which increase the GTP hydrolysis activity. Inhibited by GDP dissociation inhibitors (GDIs). In terms of biological role, the small GTPases Rab are key regulators of intracellular membrane trafficking, from the formation of transport vesicles to their fusion with membranes. Rabs cycle between an inactive GDP-bound form and an active GTP-bound form that is able to recruit to membranes different sets of downstream effectors directly responsible for vesicle formation, movement, tethering and fusion. RAB1A regulates vesicular protein transport from the endoplasmic reticulum (ER) to the Golgi compartment and on to the cell surface, and plays a role in IL-8 and growth hormone secretion. Required to modulate the compacted morphology of the Golgi. Regulates the level of CASR present at the cell membrane. Plays a role in cell adhesion and cell migration, via its role in protein trafficking. Plays a role in autophagosome assembly and cellular defense reactions against pathogenic bacteria. Plays a role in microtubule-dependent protein transport by early endosomes and in anterograde melanosome transport. The chain is Ras-related protein Rab-1A (RAB1A) from Sus scrofa (Pig).